We begin with the raw amino-acid sequence, 300 residues long: Coatomer subunit epsilon (300 aa).

It belongs to the COPE family. As to quaternary structure, oligomeric complex that consists of at least the alpha, beta, beta', gamma, delta, epsilon and zeta subunits.

It is found in the cytoplasm. The protein resides in the golgi apparatus membrane. Its subcellular location is the cytoplasmic vesicle. The protein localises to the COPI-coated vesicle membrane. Functionally, the coatomer is a cytosolic protein complex that binds to dilysine motifs and reversibly associates with Golgi non-clathrin-coated vesicles, which further mediate biosynthetic protein transport from the ER, via the Golgi up to the trans Golgi network. The coatomer complex is required for budding from Golgi membranes, and is essential for the retrograde Golgi-to-ER transport of dilysine-tagged proteins. In Dictyostelium discoideum (Social amoeba), this protein is Coatomer subunit epsilon (cope).